A 5289-amino-acid chain; its full sequence is Mucin-2 (5289 aa).

Residues 1 to 20 (MGLPLARLAAVCLALSLAGG) form the signal peptide. Serine 21 is modified (phosphoserine). Cu(2+) is bound at residue histidine 34. A VWFD 1 domain is found at 35–207 (NVCSTWGNFH…KINQPDVVCE (173 aa)). 29 disulfides stabilise this stretch: cysteine 37–cysteine 169, cysteine 59–cysteine 206, cysteine 67–cysteine 166, cysteine 218–cysteine 255, cysteine 225–cysteine 250, cysteine 237–cysteine 275, cysteine 257–cysteine 263, cysteine 265–cysteine 291, cysteine 295–cysteine 329, cysteine 308–cysteine 321, cysteine 312–cysteine 351, cysteine 331–cysteine 345, cysteine 353–cysteine 375, cysteine 370–cysteine 387, cysteine 373–cysteine 382, cysteine 391–cysteine 528, cysteine 413–cysteine 563, cysteine 435–cysteine 443, cysteine 574–cysteine 619, cysteine 588–cysteine 614, cysteine 601–cysteine 639, cysteine 621–cysteine 627, cysteine 629–cysteine 654, cysteine 661–cysteine 698, cysteine 674–cysteine 688, cysteine 678–cysteine 718, cysteine 700–cysteine 712, cysteine 720–cysteine 742, and cysteine 740–cysteine 749. Aspartate 49 contributes to the Ca(2+) binding site. Cu(+)-binding residues include methionine 146 and methionine 154. Cu(2+) is bound at residue glutamate 156. The N-linked (GlcNAc...) asparagine glycan is linked to asparagine 163. Ca(2+) is bound by residues aspartate 171, asparagine 173, leucine 175, and glutamate 180. Histidine 277 is a Cu(2+) binding site. The TIL domain occupies 295 to 351 (CPGNLVYLESGSPCMDTCSHLEVSSLCEEHRMDGCFCPEGTVYDDIGDSGCVPVSQC). Histidine 324 is a binding site for Cu(2+). Position 326 (methionine 326) interacts with Cu(+). The VWFD 2 domain maps to 389 to 564 (GTCALEGGSH…NTWKAQSSCH (176 aa)). Aspartate 403 lines the Ca(2+) pocket. An N-linked (GlcNAc...) asparagine glycan is attached at asparagine 423. Asparagine 530, asparagine 532, leucine 534, aspartate 537, and aspartate 538 together coordinate Ca(2+). Asparagine 670 is a glycosylation site (N-linked (GlcNAc...) asparagine). Asparagine 770 carries an N-linked (GlcNAc...) asparagine glycan. Cystine bridges form between cysteine 784/cysteine 820, cysteine 802/cysteine 814, cysteine 822/cysteine 844, cysteine 839/cysteine 856, cysteine 842/cysteine 851, cysteine 860/cysteine 992, cysteine 882/cysteine 1027, cysteine 891/cysteine 989, cysteine 909/cysteine 916, cysteine 1037/cysteine 1080, cysteine 1051/cysteine 1075, cysteine 1062/cysteine 1102, cysteine 1082/cysteine 1090, cysteine 1092/cysteine 1117, cysteine 1108/cysteine 1137, cysteine 1121/cysteine 1163, cysteine 1145/cysteine 1187, cysteine 1167/cysteine 1181, cysteine 1189/cysteine 1213, cysteine 1208/cysteine 1238, and cysteine 1211/cysteine 1221. The VWFD 3 domain maps to 858-1028 (GTCSIYGSGH…NSWKEAPTCP (171 aa)). Residue aspartate 872 participates in Ca(2+) binding. An N-linked (GlcNAc...) asparagine glycan is attached at asparagine 894. Positions 994, 996, 998, 1001, and 1002 each coordinate Ca(2+). N-linked (GlcNAc...) asparagine glycosylation is found at asparagine 1139 and asparagine 1154. N-linked (GlcNAc...) asparagine glycans are attached at residues asparagine 1215, asparagine 1230, and asparagine 1246. Threonine 1266, threonine 1267, threonine 1269, threonine 1270, threonine 1272, threonine 1275, threonine 1276, threonine 1281, threonine 1282, and threonine 1287 each carry an O-linked (GalNAc) threonine glycan. O-linked (GalNAc) serine glycans are attached at residues serine 1291 and serine 1292. O-linked (GalNAc) threonine glycosylation occurs at threonine 1293. Serine 1296 is a glycosylation site (O-linked (GalNAc) serine). Threonine 1297 carries O-linked (GalNAc) threonine glycosylation. Residues asparagine 1310, aspartate 1312, histidine 1313, serine 1316, aspartate 1319, glycine 1321, aspartate 1322, glutamate 1324, aspartate 1381, and tyrosine 1382 each contribute to the Ca(2+) site. Composition is skewed to pro residues over residues 1399-1411 (PSPP…PPPT), 1419-1510 (TTTP…PITP), 1520-1549 (TTTP…PITP), 1559-1628 (TTTP…PITP), and 1638-1679 (TTTP…PPTT). Residues 1399-1773 (PSPPTTTPSP…SITPPTFSPF (375 aa)) are disordered. A run of 6 repeats spans residues 1401–1416 (PPTT…TTTL), 1417–1432 (PPTT…TTTP), 1433–1448 (PPTT…TTTP), 1449–1464 (PPTT…TTTP), 1465–1471 (PPTTTPS), and 1472–1478 (PPTTTPS). The interval 1401 to 1747 (PPTTTPSPPP…SPPTTTMTTL (347 aa)) is approximate repeats. Residues 1479-1494 (PPTTTPSPPTTTTTTP) form a 7A repeat. The stretch at 1495–1517 (PPTTTPSPPTTTPITPPASTTTL) is one 7B repeat. Residues 1518–1533 (PPTTTPSPPTTTTTTP) form an 8A repeat. The 8B repeat unit spans residues 1534-1556 (PPTTTPSPPTTTPITPPTSTTTL). Residues 1557-1572 (PPTTTPSPPPTTTTTP) form a 9A repeat. Residues 1573–1596 (PPTTTPSPPTTTTPSPPTITTTTP) form a 9B repeat. The 10A repeat unit spans residues 1597 to 1612 (PPTTTPSPPTTTTTTP). A 10B repeat occupies 1613–1635 (PPTTTPSPPTTTPITPPTSTTTL). One copy of the 11A repeat lies at 1636-1651 (PPTTTPSPPPTTTTTP). Residues 1652-1675 (PPTTTPSPPTTTTPSPPITTTTTP) form an 11B repeat. Repeat copies occupy residues 1676–1683 (PPTTTPSS), 1684–1699 (PITT…MTTP), 1700–1715 (SPTT…TTTP), 1716–1731 (SSTT…MTTP), and 1732–1747 (SPTT…MTTL). Low complexity-rich tracts occupy residues 1680–1720 (TPSS…STTT) and 1741–1759 (TTTM…LTTT). Over residues 1760–1770 (PLPPSITPPTF) the composition is skewed to pro residues. 2 N-linked (GlcNAc...) asparagine glycosylation sites follow: asparagine 1787 and asparagine 1820. Low complexity-rich tracts occupy residues 1885 to 2158 (MTTT…TMVT), 2165 to 4238 (GTQT…QTPT), 4269 to 4315 (TTVT…STAP), and 4329 to 4430 (STPQ…PSII). 2 disordered regions span residues 1885-4238 (MTTT…QTPT) and 4269-4430 (TTVT…PSII). N-linked (GlcNAc...) asparagine glycosylation is found at asparagine 4449, asparagine 4461, asparagine 4472, and asparagine 4483. The interval 4492–4524 (PTPTPSKSTPTPSKPSSTPSKPTPGTKPPECPD) is disordered. The span at 4496-4511 (PSKSTPTPSKPSSTPS) shows a compositional bias: low complexity. The segment covering 4512 to 4522 (KPTPGTKPPEC) has biased composition (pro residues). N-linked (GlcNAc...) asparagine glycosylation is found at asparagine 4532, asparagine 4548, and asparagine 4612. Positions 4589–4772 (CYCTGWGDPH…VNDPSKPHCP (184 aa)) constitute a VWFD 4 domain. Intrachain disulfides connect cysteine 4591/cysteine 4732, cysteine 4613/cysteine 4771, and cysteine 4637/cysteine 4645. N-linked (GlcNAc...) asparagine glycans are attached at residues asparagine 4726 and asparagine 4737. The interval 4770–4795 (HCPHSSSTTKRPAVTVPGGGKTTPHK) is disordered. N-linked (GlcNAc...) asparagine glycans are attached at residues asparagine 4862, asparagine 4897, asparagine 4991, asparagine 4998, asparagine 5065, asparagine 5080, asparagine 5129, asparagine 5148, and asparagine 5179. The VWFC 1 domain maps to 4927–4996 (CVGPDNVPRE…DTCCNITVCK (70 aa)). Residues 5034–5101 (GVCVHGNAEY…APGECCKKCE (68 aa)) enclose the VWFC 2 domain. Disulfide bonds link cysteine 5185–cysteine 5232, cysteine 5199–cysteine 5246, cysteine 5208–cysteine 5262, and cysteine 5212–cysteine 5264. Residues 5185 to 5270 (CSTVPVTTEV…SCQCQDTVCG (86 aa)) enclose the CTCK domain.

In terms of assembly, homomultimer; disulfide-linked. The N- and C-terminus mediate their assembly into higher order structures to form filaments. The CTCK domains of two polypeptides associate in the endoplasmic reticulum to generate intermolecularly disulfide-bonded dimers. These dimers progress to the Golgi apparatus, which is a more acidic environment than the endoplasmic reticulum. Under acidic conditions, the N-termini form non-covalent intermolecular interactions that juxtapose assemblies of the third VWD domain (VWD3) from different CTCK-linked dimers. The VWD3 assemblies then become disulfide bonded to one another to produce long, disulfide-linked polymers that remain highly compact until secretion. Interacts with FCGBP. Interacts with AGR2; disulfide-linked. (Microbial infection) Interacts in vitro with L.monocytogenes internalin proteins InlB, InlC and InlJ; for InlC binding is slightly better at pH 5.5, (the pH of the intestine) than at pH 7.4. Post-translationally, O-glycosylated. O-glycosylation is required for mucin assembly. Goblet cells synthesize two forms of mucin that differ in branched chain O-glycosylation and the site of production in the colon. In terms of processing, may undergo proteolytic cleavage in the outer mucus layer of the colon, contributing to the expanded volume and loose nature of this layer which allows for bacterial colonization in contrast to the inner mucus layer which is dense and devoid of bacteria. At low pH of 6 and under, undergoes autocatalytic cleavage in vitro in the N-terminal region of the fourth VWD domain. It is likely that this also occurs in vivo and is triggered by the low pH of the late secretory pathway. As to expression, colon, small intestine, colonic tumors, bronchus, cervix and gall bladder.

It is found in the secreted. Functionally, coats the epithelia of the intestines and other mucus membrane-containing organs to provide a protective, lubricating barrier against particles and infectious agents at mucosal surfaces. Major constituent of the colon mucus, which is mainly formed by large polymeric networks of MUC2 secreted by goblet cells that cover the exposed surfaces of intestine. MUC2 networks form hydrogels that guard the underlying epithelium from pathogens and other hazardous matter entering from the outside world, while permitting nutrient absorption and gas exchange. Acts as a divalent copper chaperone that protects intestinal cells from copper toxicity and facilitates nutritional copper unptake into cells. Binds both Cu(2+) and its reduced form, Cu(1+), at two juxtaposed binding sites: Cu(2+), once reduced to Cu(1+) by vitamin C (ascorbate) or other dietary antioxidants, transits to the other binding site. MUC2-bound Cu(1+) is protected from oxidation in aerobic environments, and can be released for nutritional delivery to cells. Mucin gels store antimicrobial molecules that participate in innate immunity. Mucin glycoproteins also house and feed the microbiome, lubricate tissue surfaces, and may facilitate the removal of contaminants and waste products from the body. Goblet cells synthesize two forms of MUC2 mucin that differ in branched chain O-glycosylation and the site of production in the colon: a (1) 'thick' mucus that wraps the microbiota to form fecal pellets is produced in the proximal, ascending colon. 'Thick' mucus transits along the descending colon and is lubricated by a (2) 'thin' MUC2 mucus produced in the distal colon which adheres to the 'thick' mucus. This Homo sapiens (Human) protein is Mucin-2.